The primary structure comprises 149 residues: Nucleoside diphosphate kinase (149 aa).

6 residues coordinate ATP: lysine 9, phenylalanine 57, arginine 85, threonine 91, arginine 102, and asparagine 112. The active-site Pros-phosphohistidine intermediate is histidine 115.

This sequence belongs to the NDK family. As to quaternary structure, homotetramer. The cofactor is Mg(2+).

It localises to the cytoplasm. It catalyses the reaction a 2'-deoxyribonucleoside 5'-diphosphate + ATP = a 2'-deoxyribonucleoside 5'-triphosphate + ADP. The catalysed reaction is a ribonucleoside 5'-diphosphate + ATP = a ribonucleoside 5'-triphosphate + ADP. Its function is as follows. Major role in the synthesis of nucleoside triphosphates other than ATP. The ATP gamma phosphate is transferred to the NDP beta phosphate via a ping-pong mechanism, using a phosphorylated active-site intermediate. The sequence is that of Nucleoside diphosphate kinase from Pelotomaculum thermopropionicum (strain DSM 13744 / JCM 10971 / SI).